The chain runs to 98 residues: Ribonuclease P protein component 4 (98 aa).

The Zn(2+) site is built by Cys-62, Cys-65, Cys-85, and Cys-88.

This sequence belongs to the eukaryotic/archaeal RNase P protein component 4 family. As to quaternary structure, consists of a catalytic RNA component and at least 4-5 protein subunits. The cofactor is Zn(2+).

It localises to the cytoplasm. It carries out the reaction Endonucleolytic cleavage of RNA, removing 5'-extranucleotides from tRNA precursor.. In terms of biological role, part of ribonuclease P, a protein complex that generates mature tRNA molecules by cleaving their 5'-ends. The chain is Ribonuclease P protein component 4 from Thermoplasma volcanium (strain ATCC 51530 / DSM 4299 / JCM 9571 / NBRC 15438 / GSS1).